The sequence spans 1486 residues: Chromosome partition protein MukB (1486 aa).

34-41 contacts ATP; it reads GGNGAGKS. Coiled coils occupy residues 334 to 418, 444 to 480, and 509 to 603; these read SDHL…QYNQ, LETFQAKEQEATEKMLSLEQKMSMAQTAHSQFEQAYQ, and RHLA…RAPV. The segment at 666-783 is flexible hinge; the sequence is PGGSEDQRLN…EVPLFGRAAR (118 aa). Coiled-coil stretches lie at residues 835-923, 977-1115, and 1209-1266; these read EAEI…AKLE, EMLS…TAKA, and VEAI…QNVS.

This sequence belongs to the SMC family. MukB subfamily. In terms of assembly, homodimerization via its hinge domain. Binds to DNA via its C-terminal region. Interacts, and probably forms a ternary complex, with MukE and MukF via its C-terminal region. The complex formation is stimulated by calcium or magnesium. Interacts with tubulin-related protein FtsZ.

Its subcellular location is the cytoplasm. The protein resides in the nucleoid. Plays a central role in chromosome condensation, segregation and cell cycle progression. Functions as a homodimer, which is essential for chromosome partition. Involved in negative DNA supercoiling in vivo, and by this means organize and compact chromosomes. May achieve or facilitate chromosome segregation by condensation DNA from both sides of a centrally located replisome during cell division. The protein is Chromosome partition protein MukB of Shigella sonnei (strain Ss046).